The following is a 276-amino-acid chain: Acetyl-coenzyme A carboxylase carboxyl transferase subunit beta (276 aa).

Residues 24-276 (LWRECSNCHE…NNLLNLHSDK (253 aa)) form the CoA carboxyltransferase N-terminal domain. Zn(2+)-binding residues include cysteine 28, cysteine 31, cysteine 46, and cysteine 49. A C4-type zinc finger spans residues 28–49 (CSNCHEKFYYRRAGVYEVCPNC).

Belongs to the AccD/PCCB family. As to quaternary structure, acetyl-CoA carboxylase is a heterohexamer composed of biotin carboxyl carrier protein (AccB), biotin carboxylase (AccC) and two subunits each of ACCase subunit alpha (AccA) and ACCase subunit beta (AccD). The cofactor is Zn(2+).

It localises to the cytoplasm. The enzyme catalyses N(6)-carboxybiotinyl-L-lysyl-[protein] + acetyl-CoA = N(6)-biotinyl-L-lysyl-[protein] + malonyl-CoA. It participates in lipid metabolism; malonyl-CoA biosynthesis; malonyl-CoA from acetyl-CoA: step 1/1. Its function is as follows. Component of the acetyl coenzyme A carboxylase (ACC) complex. Biotin carboxylase (BC) catalyzes the carboxylation of biotin on its carrier protein (BCCP) and then the CO(2) group is transferred by the transcarboxylase to acetyl-CoA to form malonyl-CoA. This chain is Acetyl-coenzyme A carboxylase carboxyl transferase subunit beta, found in Pediococcus pentosaceus (strain ATCC 25745 / CCUG 21536 / LMG 10740 / 183-1w).